The chain runs to 62 residues: DNA gyrase inhibitor YacG (62 aa).

Positions 9, 12, 27, and 31 each coordinate Zn(2+). Positions 43–52 are enriched in basic and acidic residues; the sequence is GYRIPGEKAP. Positions 43–62 are disordered; it reads GYRIPGEKAPESGGEEPGDE.

The protein belongs to the DNA gyrase inhibitor YacG family. As to quaternary structure, interacts with GyrB. The cofactor is Zn(2+).

Functionally, inhibits all the catalytic activities of DNA gyrase by preventing its interaction with DNA. Acts by binding directly to the C-terminal domain of GyrB, which probably disrupts DNA binding by the gyrase. The chain is DNA gyrase inhibitor YacG from Geobacter sp. (strain M21).